Here is a 227-residue protein sequence, read N- to C-terminus: Cytochrome c oxidase subunit 2 (227 aa).

The Mitochondrial intermembrane segment spans residues 1 to 14 (MAYPFQLGFQDATS). A helical membrane pass occupies residues 15 to 45 (PIMEELLHFHDHTLMIVFLISSLVLYIITLM). Over 46 to 59 (LTTKLTHTSTMDAQ) the chain is Mitochondrial matrix. Residues 60–87 (EVETVWTILPAIILILIALPSLRILYMM) form a helical membrane-spanning segment. At 88–227 (DEVNNPSLTV…FFEKWSASML (140 aa)) the chain is on the mitochondrial intermembrane side. 6 residues coordinate Cu cation: histidine 161, cysteine 196, glutamate 198, cysteine 200, histidine 204, and methionine 207. Glutamate 198 contributes to the Mg(2+) binding site.

It belongs to the cytochrome c oxidase subunit 2 family. In terms of assembly, component of the cytochrome c oxidase (complex IV, CIV), a multisubunit enzyme composed of 14 subunits. The complex is composed of a catalytic core of 3 subunits MT-CO1, MT-CO2 and MT-CO3, encoded in the mitochondrial DNA, and 11 supernumerary subunits COX4I, COX5A, COX5B, COX6A, COX6B, COX6C, COX7A, COX7B, COX7C, COX8 and NDUFA4, which are encoded in the nuclear genome. The complex exists as a monomer or a dimer and forms supercomplexes (SCs) in the inner mitochondrial membrane with NADH-ubiquinone oxidoreductase (complex I, CI) and ubiquinol-cytochrome c oxidoreductase (cytochrome b-c1 complex, complex III, CIII), resulting in different assemblies (supercomplex SCI(1)III(2)IV(1) and megacomplex MCI(2)III(2)IV(2)). Found in a complex with TMEM177, COA6, COX18, COX20, SCO1 and SCO2. Interacts with TMEM177 in a COX20-dependent manner. Interacts with COX20. Interacts with COX16. Requires Cu cation as cofactor.

Its subcellular location is the mitochondrion inner membrane. The enzyme catalyses 4 Fe(II)-[cytochrome c] + O2 + 8 H(+)(in) = 4 Fe(III)-[cytochrome c] + 2 H2O + 4 H(+)(out). In terms of biological role, component of the cytochrome c oxidase, the last enzyme in the mitochondrial electron transport chain which drives oxidative phosphorylation. The respiratory chain contains 3 multisubunit complexes succinate dehydrogenase (complex II, CII), ubiquinol-cytochrome c oxidoreductase (cytochrome b-c1 complex, complex III, CIII) and cytochrome c oxidase (complex IV, CIV), that cooperate to transfer electrons derived from NADH and succinate to molecular oxygen, creating an electrochemical gradient over the inner membrane that drives transmembrane transport and the ATP synthase. Cytochrome c oxidase is the component of the respiratory chain that catalyzes the reduction of oxygen to water. Electrons originating from reduced cytochrome c in the intermembrane space (IMS) are transferred via the dinuclear copper A center (CU(A)) of subunit 2 and heme A of subunit 1 to the active site in subunit 1, a binuclear center (BNC) formed by heme A3 and copper B (CU(B)). The BNC reduces molecular oxygen to 2 water molecules using 4 electrons from cytochrome c in the IMS and 4 protons from the mitochondrial matrix. The protein is Cytochrome c oxidase subunit 2 (MT-CO2) of Balaenoptera musculus (Blue whale).